A 305-amino-acid polypeptide reads, in one-letter code: MHLLDLDVLSREDVLKIIEYGIYFKKNRRKHEKILEGKSVAILFEKPSTRTRMSFDIAVYELGGHPLIMNQNEIHLGKKESIKDTAKVMGRYVDTIVARVYKHRHLEEMAKYSSVPVINALSDLAHPCQILADLMTIKEYKGKFKGLKIAYLGDGNNVCNSLILGSALVGMDTYVGTPKGYEPNAKVVLKAKEIINNYGEGSLTLTNDPIEAAEDADVLYTDVWISMGDDKDKEEVLKIFPPFQINSKLLEYAKDDVIVMHCLPANRGYEITDDVIDGEHSVVYDEAENRLHVQKGVFKFIFERK.

Carbamoyl phosphate contacts are provided by residues 48 to 51, R99, and 126 to 129; these read STRT and HPCQ. L-ornithine is bound by residues N157, D222, and 226 to 227; that span reads SM. Carbamoyl phosphate is bound by residues 262-263 and R290; that span reads CL.

The protein belongs to the aspartate/ornithine carbamoyltransferase superfamily. OTCase family.

It localises to the cytoplasm. It catalyses the reaction carbamoyl phosphate + L-ornithine = L-citrulline + phosphate + H(+). It functions in the pathway amino-acid biosynthesis; L-arginine biosynthesis; L-arginine from L-ornithine and carbamoyl phosphate: step 1/3. In terms of biological role, reversibly catalyzes the transfer of the carbamoyl group from carbamoyl phosphate (CP) to the N(epsilon) atom of ornithine (ORN) to produce L-citrulline. The polypeptide is Ornithine carbamoyltransferase (argF) (Methanocaldococcus jannaschii (strain ATCC 43067 / DSM 2661 / JAL-1 / JCM 10045 / NBRC 100440) (Methanococcus jannaschii)).